The following is a 387-amino-acid chain: ATP phosphoribosyltransferase regulatory subunit (387 aa).

It belongs to the class-II aminoacyl-tRNA synthetase family. HisZ subfamily. As to quaternary structure, heteromultimer composed of HisG and HisZ subunits.

It is found in the cytoplasm. It functions in the pathway amino-acid biosynthesis; L-histidine biosynthesis; L-histidine from 5-phospho-alpha-D-ribose 1-diphosphate: step 1/9. In terms of biological role, required for the first step of histidine biosynthesis. May allow the feedback regulation of ATP phosphoribosyltransferase activity by histidine. The polypeptide is ATP phosphoribosyltransferase regulatory subunit (Ralstonia pickettii (strain 12J)).